The chain runs to 152 residues: Peptide deformylase (152 aa).

Residues Cys-88 and His-130 each coordinate Fe cation. Residue Glu-131 is part of the active site. His-134 contacts Fe cation.

Belongs to the polypeptide deformylase family. Requires Fe(2+) as cofactor.

The catalysed reaction is N-terminal N-formyl-L-methionyl-[peptide] + H2O = N-terminal L-methionyl-[peptide] + formate. Functionally, removes the formyl group from the N-terminal Met of newly synthesized proteins. Requires at least a dipeptide for an efficient rate of reaction. N-terminal L-methionine is a prerequisite for activity but the enzyme has broad specificity at other positions. In Carboxydothermus hydrogenoformans (strain ATCC BAA-161 / DSM 6008 / Z-2901), this protein is Peptide deformylase.